We begin with the raw amino-acid sequence, 206 residues long: LexA repressor (206 aa).

A DNA-binding region (H-T-H motif) is located at residues 27–47 (YEEIRQNLGFRSLNAVFKHLK). Residues serine 120 and lysine 157 each act as for autocatalytic cleavage activity in the active site.

Belongs to the peptidase S24 family. As to quaternary structure, homodimer.

It carries out the reaction Hydrolysis of Ala-|-Gly bond in repressor LexA.. In terms of biological role, represses a number of genes involved in the response to DNA damage (SOS response), including recA and lexA. In the presence of single-stranded DNA, RecA interacts with LexA causing an autocatalytic cleavage which disrupts the DNA-binding part of LexA, leading to derepression of the SOS regulon and eventually DNA repair. In Syntrophobacter fumaroxidans (strain DSM 10017 / MPOB), this protein is LexA repressor.